We begin with the raw amino-acid sequence, 366 residues long: Chorismate synthase (366 aa).

NADP(+)-binding residues include R48 and R54. Residues 132–134, 244–245, G289, 304–308, and R330 contribute to the FMN site; these read RSS, NA, and KPTSS.

It belongs to the chorismate synthase family. In terms of assembly, homotetramer. The cofactor is FMNH2.

The catalysed reaction is 5-O-(1-carboxyvinyl)-3-phosphoshikimate = chorismate + phosphate. Its pathway is metabolic intermediate biosynthesis; chorismate biosynthesis; chorismate from D-erythrose 4-phosphate and phosphoenolpyruvate: step 7/7. Its function is as follows. Catalyzes the anti-1,4-elimination of the C-3 phosphate and the C-6 proR hydrogen from 5-enolpyruvylshikimate-3-phosphate (EPSP) to yield chorismate, which is the branch point compound that serves as the starting substrate for the three terminal pathways of aromatic amino acid biosynthesis. This reaction introduces a second double bond into the aromatic ring system. The protein is Chorismate synthase of Methylorubrum populi (strain ATCC BAA-705 / NCIMB 13946 / BJ001) (Methylobacterium populi).